We begin with the raw amino-acid sequence, 1111 residues long: Protein STU1 (1111 aa).

2 HEAT repeats span residues 95 to 133 and 167 to 205; these read ALPL…ERSV and YVPT…KSDL. Disordered regions lie at residues 225-245 and 476-751; these read ELNP…VEPS and RLLQ…VDEE. Polar residues predominate over residues 502-511; it reads SKSTMGTSKP. Residues 704–714 are compositionally biased toward basic and acidic residues; it reads PREEQRFVKPV.

It belongs to the CLASP family. As to quaternary structure, interacts with microtubules.

It is found in the cytoplasm. Its subcellular location is the cytoskeleton. The protein resides in the nucleus. The protein localises to the spindle. Functionally, microtubule binding protein that promotes the stabilization of dynamic microtubules. Required for mitotic spindle formation. The sequence is that of Protein STU1 (STU1) from Chaetomium globosum (strain ATCC 6205 / CBS 148.51 / DSM 1962 / NBRC 6347 / NRRL 1970) (Soil fungus).